A 137-amino-acid polypeptide reads, in one-letter code: MPTINQLVRKPRKSKAKKSDSPALNKGFNSMKKQFTDLNSPQKRGVCTRVGTMTPKKPNSALRKYARVRLSNNIEINAYIPGIGHNLQEHSVVLVRGGRVKDLPGVRYHIVRGALDTSGVEGRMQSRSLYGTKRPKK.

The interval 1–28 is disordered; it reads MPTINQLVRKPRKSKAKKSDSPALNKGF. A 3-methylthioaspartic acid modification is found at D102.

It belongs to the universal ribosomal protein uS12 family. Part of the 30S ribosomal subunit. Contacts proteins S8 and S17. May interact with IF1 in the 30S initiation complex.

Its function is as follows. With S4 and S5 plays an important role in translational accuracy. Functionally, interacts with and stabilizes bases of the 16S rRNA that are involved in tRNA selection in the A site and with the mRNA backbone. Located at the interface of the 30S and 50S subunits, it traverses the body of the 30S subunit contacting proteins on the other side and probably holding the rRNA structure together. The combined cluster of proteins S8, S12 and S17 appears to hold together the shoulder and platform of the 30S subunit. The chain is Small ribosomal subunit protein uS12 from Staphylococcus carnosus (strain TM300).